Reading from the N-terminus, the 845-residue chain is Molybdenum cofactor sulfurase (845 aa).

Residue Lys240 is modified to N6-(pyridoxal phosphate)lysine. Cys404 is a catalytic residue. Residues 666–840 (SFPQDSSPSS…LMVGDTVTPS (175 aa)) form the MOSC domain.

It belongs to the class-V pyridoxal-phosphate-dependent aminotransferase family. MOCOS subfamily. Pyridoxal 5'-phosphate is required as a cofactor.

It carries out the reaction Mo-molybdopterin + L-cysteine + AH2 = thio-Mo-molybdopterin + L-alanine + A + H2O. It participates in cofactor biosynthesis; molybdopterin biosynthesis. Sulfurates the molybdenum cofactor. Sulfation of molybdenum is essential for xanthine dehydrogenase (XDH) and aldehyde oxidase (ADO) enzymes in which molybdenum cofactor is liganded by 1 oxygen and 1 sulfur atom in active form. This chain is Molybdenum cofactor sulfurase, found in Aspergillus clavatus (strain ATCC 1007 / CBS 513.65 / DSM 816 / NCTC 3887 / NRRL 1 / QM 1276 / 107).